Here is a 247-residue protein sequence, read N- to C-terminus: ATP synthase subunit a, chloroplastic (247 aa).

5 helical membrane passes run 38–58 (QVLITSWVVIAILLGSATLAV), 95–115 (VPFIGTMFLFIFVSNWSGALL), 134–154 (INTTVALALLTSVAYFYAGLT), 199–219 (LVVVVLVSLVPSIVPIPVMFL), and 220–240 (GLFTSGIQALIFATLAAAYIG).

Belongs to the ATPase A chain family. In terms of assembly, F-type ATPases have 2 components, CF(1) - the catalytic core - and CF(0) - the membrane proton channel. CF(1) has five subunits: alpha(3), beta(3), gamma(1), delta(1), epsilon(1). CF(0) has four main subunits: a, b, b' and c.

The protein resides in the plastid. The protein localises to the chloroplast thylakoid membrane. Functionally, key component of the proton channel; it plays a direct role in the translocation of protons across the membrane. The chain is ATP synthase subunit a, chloroplastic from Vitis vinifera (Grape).